The sequence spans 390 residues: Zinc transporter 7 (390 aa).

The Cytoplasmic portion of the chain corresponds to Met1–Asn37. The chain crosses the membrane as a helical span at residues Leu38–Trp58. The Lumenal segment spans residues Ser59–Asp67. A helical transmembrane segment spans residues Ser68–Ser88. The Cytoplasmic segment spans residues Arg89 to Arg102. A helical transmembrane segment spans residues Ala103–Phe123. Residues Ser124–Arg140 are Lumenal-facing. Residues Leu141–His161 form a helical membrane-spanning segment. Residues His161–His226 are his-rich loop. At Gly162–Gly250 the chain is on the cytoplasmic side. The tract at residues His167–Ser243 is disordered. The span at His177 to His186 shows a compositional bias: low complexity. Over residues Gly187–His208 the composition is skewed to basic residues. Basic and acidic residues-rich tracts occupy residues Ser209–His222 and Cys232–Gly242. A helical membrane pass occupies residues Val251 to Leu271. Over Met272 to Gly276 the chain is Lumenal. A helical membrane pass occupies residues Leu277–Ile297. Over Pro298 to Met390 the chain is Cytoplasmic.

It belongs to the cation diffusion facilitator (CDF) transporter (TC 2.A.4) family. SLC30A subfamily. Homooligomer.

Its subcellular location is the golgi apparatus membrane. The protein resides in the cytoplasmic vesicle. It is found in the golgi apparatus. It localises to the trans-Golgi network. The protein localises to the sarcoplasmic reticulum. Its subcellular location is the mitochondrion. It catalyses the reaction Zn(2+)(in) = Zn(2+)(out). Functionally, zinc ion transporter mediating zinc entry from the cytosol into the lumen of organelles along the secretory pathway. By contributing to zinc ion homeostasis within the early secretory pathway, regulates the activation and folding of enzymes like alkaline phosphatases. This Xenopus tropicalis (Western clawed frog) protein is Zinc transporter 7 (slc30a7).